A 132-amino-acid polypeptide reads, in one-letter code: Small ribosomal subunit protein uS8 (132 aa).

Belongs to the universal ribosomal protein uS8 family. As to quaternary structure, part of the 30S ribosomal subunit. Contacts proteins S5 and S12.

In terms of biological role, one of the primary rRNA binding proteins, it binds directly to 16S rRNA central domain where it helps coordinate assembly of the platform of the 30S subunit. This chain is Small ribosomal subunit protein uS8, found in Geobacter sp. (strain M21).